Reading from the N-terminus, the 128-residue chain is Fluoride-specific ion channel FluC (128 aa).

The next 4 helical transmembrane spans lie at 5–25 (IVAI…LSLA), 35–55 (LGTL…AVVF), 67–87 (LFVI…SVEV), and 96–116 (FGWA…LTAL). Na(+)-binding residues include glycine 75 and threonine 78.

It belongs to the fluoride channel Fluc/FEX (TC 1.A.43) family.

It localises to the cell inner membrane. It carries out the reaction fluoride(in) = fluoride(out). Na(+) is not transported, but it plays an essential structural role and its presence is essential for fluoride channel function. Its function is as follows. Fluoride-specific ion channel. Important for reducing fluoride concentration in the cell, thus reducing its toxicity. This is Fluoride-specific ion channel FluC from Burkholderia cenocepacia (strain HI2424).